A 432-amino-acid chain; its full sequence is D-amino acid dehydrogenase (432 aa).

Residue 3-17 (VLVLGGGVIGVTSAY) coordinates FAD.

It belongs to the DadA oxidoreductase family. The cofactor is FAD.

The enzyme catalyses a D-alpha-amino acid + A + H2O = a 2-oxocarboxylate + AH2 + NH4(+). It functions in the pathway amino-acid degradation; D-alanine degradation; NH(3) and pyruvate from D-alanine: step 1/1. Oxidative deamination of D-amino acids. This is D-amino acid dehydrogenase from Delftia acidovorans (strain DSM 14801 / SPH-1).